Reading from the N-terminus, the 1103-residue chain is Detocs histidine-protein kinase DtcA (1103 aa).

His758 is modified (phosphohistidine; by autocatalysis). The TPR repeat unit spans residues 818–851 (TIINDAKEKVHINTGEFIESAKVFNYAIEIEFVE).

Autophosphorylated.

The catalysed reaction is ATP + protein L-histidine = ADP + protein N-phospho-L-histidine.. Functionally, sensor-kinase member of the two-component regulatory system Detocs that confers resistance to bacteriophage. When the system (DtcA-DtcB-DtcC) is expressed in a susceptible E.coli (strain MG1655) it confers resistance to bacteriophages T2, T4, T5, T7, SECphi4, SECphi6 and SECphi27; the level of resistance varies, resistance to T2, T7 and SECphi4 is not very high. DtcA (this subunit) probably autophosphorylates upon sensing viral infection, and subsequently transfers the phosphate signal to DtcC which activates it, leading to an antiviral defense; DtcB may scavenge phosphorylation signals from accidental activation of DtcA. This is Detocs histidine-protein kinase DtcA from Enterobacter cloacae (strain JD6301).